The following is a 337-amino-acid chain: Inositol 2-dehydrogenase (337 aa).

The protein belongs to the Gfo/Idh/MocA family. As to quaternary structure, homotetramer.

It catalyses the reaction myo-inositol + NAD(+) = scyllo-inosose + NADH + H(+). Functionally, involved in the oxidation of myo-inositol (MI) to 2-keto-myo-inositol (2KMI or 2-inosose). The protein is Inositol 2-dehydrogenase of Gluconacetobacter diazotrophicus (strain ATCC 49037 / DSM 5601 / CCUG 37298 / CIP 103539 / LMG 7603 / PAl5).